The primary structure comprises 293 residues: Methylsterol monooxygenase 1 (293 aa).

The next 2 helical transmembrane spans lie at 55–75 (LIVH…FQFI) and 100–120 (VLLF…YYFT). The Fatty acid hydroxylase domain maps to 145–274 (CAVIEDTWHY…FTWWDRIFGT (130 aa)). The Histidine box-1 signature appears at 157–161 (HRLLH). Positions 170–174 (HKIHH) match the Histidine box-2 motif. The chain crosses the membrane as a helical span at residues 199–219 (FFIGIMLLCDHVILLWAWVTV). Residues 249-255 (HHDFHHM) carry the Histidine box-3 motif.

This sequence belongs to the sterol desaturase family. Fe cation serves as cofactor. Post-translationally, ubiquitinated by MARCHF6, leading to proteasomal degradation.

The protein resides in the endoplasmic reticulum membrane. It carries out the reaction 4,4-dimethyl-5alpha-cholest-7-en-3beta-ol + 6 Fe(II)-[cytochrome b5] + 3 O2 + 5 H(+) = 4alpha-carboxy-4beta-methyl-5alpha-cholest-7-ene-3beta-ol + 6 Fe(III)-[cytochrome b5] + 4 H2O. The catalysed reaction is 4,4-dimethyl-5alpha-cholesta-8,24-dien-3beta-ol + 6 Fe(II)-[cytochrome b5] + 3 O2 + 5 H(+) = 4beta-methylzymosterol-4alpha-carboxylate + 6 Fe(III)-[cytochrome b5] + 4 H2O. The enzyme catalyses 4alpha-methylzymosterol + 6 Fe(II)-[cytochrome b5] + 3 O2 + 5 H(+) = 4alpha-carboxyzymosterol + 6 Fe(III)-[cytochrome b5] + 4 H2O. It catalyses the reaction 4alpha-methyl-5alpha-cholest-7-en-3beta-ol + 6 Fe(II)-[cytochrome b5] + 3 O2 + 5 H(+) = 4alpha-carboxy-5alpha-cholest-7-en-3beta-ol + 6 Fe(III)-[cytochrome b5] + 4 H2O. It carries out the reaction 4,4-dimethyl-5alpha-cholest-8-en-3beta-ol + 6 Fe(II)-[cytochrome b5] + 3 O2 + 5 H(+) = 4alpha-carboxy-4beta-methyl-5alpha-cholest-8-en-3beta-ol + 6 Fe(III)-[cytochrome b5] + 4 H2O. The catalysed reaction is 4alpha-methyl-5alpha-cholest-8-en-3beta-ol + 6 Fe(II)-[cytochrome b5] + 3 O2 + 5 H(+) = 4alpha-carboxy-5alpha-cholest-8-ene-3beta-ol + 6 Fe(III)-[cytochrome b5] + 4 H2O. It functions in the pathway steroid biosynthesis; zymosterol biosynthesis; zymosterol from lanosterol: step 3/6. The protein operates within steroid biosynthesis; cholesterol biosynthesis. Catalyzes the three-step monooxygenation required for the demethylation of 4,4-dimethyl and 4alpha-methylsterols, which can be subsequently metabolized to cholesterol. This is Methylsterol monooxygenase 1 (MSMO1) from Sus scrofa (Pig).